We begin with the raw amino-acid sequence, 767 residues long: DNA topoisomerase 1 (767 aa).

Residues 1–23 (MSGDHLHNDSQIEADFRLNDSHK) show a composition bias toward basic and acidic residues. The interval 1–201 (MSGDHLHNDS…NKKKKPKKEE (201 aa)) is disordered. Ser-2 is subject to N-acetylserine. Phosphoserine occurs at positions 2 and 10. The span at 24 to 39 (HKDKHKDREHRHKEHK) shows a compositional bias: basic residues. The span at 40 to 110 (KDKEKDREKS…DAKIKKEKEN (71 aa)) shows a compositional bias: basic and acidic residues. Phosphoserine is present on Ser-59. A Glycyl lysine isopeptide (Lys-Gly) (interchain with G-Cter in SUMO2) cross-link involves residue Lys-103. Lys-105 participates in a covalent cross-link: Glycyl lysine isopeptide (Lys-Gly) (interchain with G-Cter in SUMO); alternate. Residue Lys-105 forms a Glycyl lysine isopeptide (Lys-Gly) (interchain with G-Cter in SUMO2); alternate linkage. Phosphoserine is present on Ser-114. Lys-119 participates in a covalent cross-link: Glycyl lysine isopeptide (Lys-Gly) (interchain with G-Cter in SUMO); alternate. Lys-119 participates in a covalent cross-link: Glycyl lysine isopeptide (Lys-Gly) (interchain with G-Cter in SUMO2); alternate. A Glycyl lysine isopeptide (Lys-Gly) (interchain with G-Cter in SUMO1); alternate cross-link involves residue Lys-119. Positions 131-168 (PKEDIKPLKRPRDEDDADYKPKKIKTEDIKKEKKRKLE) are enriched in basic and acidic residues. Glycyl lysine isopeptide (Lys-Gly) (interchain with G-Cter in SUMO2) cross-links involve residues Lys-136 and Lys-150. Lys-155 participates in a covalent cross-link: Glycyl lysine isopeptide (Lys-Gly) (interchain with G-Cter in SUMO); alternate. Residue Lys-155 forms a Glycyl lysine isopeptide (Lys-Gly) (interchain with G-Cter in SUMO2); alternate linkage. Residues Lys-160 and Lys-166 each participate in a glycyl lysine isopeptide (Lys-Gly) (interchain with G-Cter in SUMO2) cross-link. Lys-174 participates in a covalent cross-link: Glycyl lysine isopeptide (Lys-Gly) (interchain with G-Cter in SUMO2); alternate. Lys-174 is modified (N6-acetyllysine; alternate). A compositionally biased stretch (basic and acidic residues) spans 181–201 (KDKDKKGAESDNKKKKPKKEE). A Glycyl lysine isopeptide (Lys-Gly) (interchain with G-Cter in SUMO2) cross-link involves residue Lys-206. Lys-282 carries the post-translational modification N6-acetyllysine. Lys-338 is covalently cross-linked (Glycyl lysine isopeptide (Lys-Gly) (interchain with G-Cter in SUMO2)). Interaction with DNA stretches follow at residues 427-428 (KY) and 490-495 (RAGNEK). Positions 434–767 (SSRIKGEKDW…IDMTDEDYEF (334 aa)) constitute a Topo IB-type catalytic domain. Ser-508 is subject to Phosphoserine; by CK2. Lys-551 is covalently cross-linked (Glycyl lysine isopeptide (Lys-Gly) (interchain with G-Cter in SUMO2)). The interaction with DNA stretch occupies residues 587–589 (TAK). Residues Lys-644, Lys-702, and Lys-714 each participate in a glycyl lysine isopeptide (Lys-Gly) (interchain with G-Cter in SUMO2) cross-link. The active-site O-(3'-phospho-DNA)-tyrosine intermediate is Tyr-725.

The protein belongs to the type IB topoisomerase family. In terms of assembly, monomer. Interacts with ERCC6. Interacts with TPRN; TPRN interacts with a number of DNA damage response proteins, is recruited to sites of DNA damage and may play a role in DNA damage repair. Sumoylated. Lys-119 is the main site of sumoylation. Sumoylation plays a role in partitioning TOP1 between nucleoli and nucleoplasm. Levels are dramatically increased on camptothecin (CPT) treatment. In terms of processing, phosphorylation at Ser-508 by CK2 increases binding to supercoiled DNA and sensitivity to camptothecin.

It is found in the nucleus. It localises to the nucleolus. The protein resides in the nucleoplasm. It carries out the reaction ATP-independent breakage of single-stranded DNA, followed by passage and rejoining.. Its activity is regulated as follows. Specifically inhibited by camptothecin (CPT), a plant alkaloid with antitumor activity. Its function is as follows. Releases the supercoiling and torsional tension of DNA introduced during the DNA replication and transcription by transiently cleaving and rejoining one strand of the DNA duplex. Introduces a single-strand break via transesterification at a target site in duplex DNA. The scissile phosphodiester is attacked by the catalytic tyrosine of the enzyme, resulting in the formation of a DNA-(3'-phosphotyrosyl)-enzyme intermediate and the expulsion of a 5'-OH DNA strand. The free DNA strand then rotates around the intact phosphodiester bond on the opposing strand, thus removing DNA supercoils. Finally, in the religation step, the DNA 5'-OH attacks the covalent intermediate to expel the active-site tyrosine and restore the DNA phosphodiester backbone. Regulates the alternative splicing of tissue factor (F3) pre-mRNA in endothelial cells. Involved in the circadian transcription of the core circadian clock component BMAL1 by altering the chromatin structure around the ROR response elements (ROREs) on the BMAL1 promoter. The chain is DNA topoisomerase 1 (TOP1) from Cricetulus griseus (Chinese hamster).